The primary structure comprises 325 residues: Elongation factor P--(R)-beta-lysine ligase (325 aa).

76–78 (SPE) is a substrate binding site. ATP is bound by residues 100–102 (RNE) and Asn109. Substrate is bound at residue Tyr118. 244 to 245 (EL) lines the ATP pocket. Glu251 contributes to the substrate binding site. Gly300 contributes to the ATP binding site.

This sequence belongs to the class-II aminoacyl-tRNA synthetase family. EpmA subfamily. Homodimer.

It carries out the reaction D-beta-lysine + L-lysyl-[protein] + ATP = N(6)-((3R)-3,6-diaminohexanoyl)-L-lysyl-[protein] + AMP + diphosphate + H(+). Functionally, with EpmB is involved in the beta-lysylation step of the post-translational modification of translation elongation factor P (EF-P). Catalyzes the ATP-dependent activation of (R)-beta-lysine produced by EpmB, forming a lysyl-adenylate, from which the beta-lysyl moiety is then transferred to the epsilon-amino group of a conserved specific lysine residue in EF-P. The protein is Elongation factor P--(R)-beta-lysine ligase of Klebsiella pneumoniae subsp. pneumoniae (strain ATCC 700721 / MGH 78578).